The following is a 341-amino-acid chain: Glycerol-3-phosphate dehydrogenase [NAD(P)+] (341 aa).

Residues Ser-14, Phe-15, Arg-35, and Lys-108 each contribute to the NADPH site. Sn-glycerol 3-phosphate contacts are provided by Lys-108 and Gly-136. NADPH is bound at residue Ala-140. Sn-glycerol 3-phosphate contacts are provided by Lys-191, Asp-244, Ser-254, Arg-255, and Asn-256. Lys-191 functions as the Proton acceptor in the catalytic mechanism. Arg-255 contributes to the NADPH binding site. 2 residues coordinate NADPH: Val-279 and Glu-281.

Belongs to the NAD-dependent glycerol-3-phosphate dehydrogenase family.

Its subcellular location is the cytoplasm. The enzyme catalyses sn-glycerol 3-phosphate + NAD(+) = dihydroxyacetone phosphate + NADH + H(+). It carries out the reaction sn-glycerol 3-phosphate + NADP(+) = dihydroxyacetone phosphate + NADPH + H(+). Its pathway is membrane lipid metabolism; glycerophospholipid metabolism. Functionally, catalyzes the reduction of the glycolytic intermediate dihydroxyacetone phosphate (DHAP) to sn-glycerol 3-phosphate (G3P), the key precursor for phospholipid synthesis. The polypeptide is Glycerol-3-phosphate dehydrogenase [NAD(P)+] (Pseudomonas entomophila (strain L48)).